A 448-amino-acid polypeptide reads, in one-letter code: Glucose-6-phosphate isomerase (448 aa).

E291 serves as the catalytic Proton donor. Active-site residues include H312 and K425.

The protein belongs to the GPI family.

The protein resides in the cytoplasm. The catalysed reaction is alpha-D-glucose 6-phosphate = beta-D-fructose 6-phosphate. The protein operates within carbohydrate biosynthesis; gluconeogenesis. Its pathway is carbohydrate degradation; glycolysis; D-glyceraldehyde 3-phosphate and glycerone phosphate from D-glucose: step 2/4. In terms of biological role, catalyzes the reversible isomerization of glucose-6-phosphate to fructose-6-phosphate. The protein is Glucose-6-phosphate isomerase of Symbiobacterium thermophilum (strain DSM 24528 / JCM 14929 / IAM 14863 / T).